We begin with the raw amino-acid sequence, 625 residues long: Enolase 4 (625 aa).

Residues 184–226 (YSTVPTPLPPVPPPPPPPPPTKKKGQKPGRKDTITEKPIAPAE) are disordered. The span at 189–203 (TPLPPVPPPPPPPPP) shows a compositional bias: pro residues. Val-300 is a substrate binding site. A disordered region spans residues 331 to 350 (PSPPKAETKKGHDGSKRGQQ). Residues 336–346 (AETKKGHDGSK) are compositionally biased toward basic and acidic residues. Asn-497 serves as the catalytic Proton acceptor. Substrate is bound at residue Gly-548. The tract at residues 604–625 (PLVPTFPTQGVEESAETGASSG) is disordered.

This sequence belongs to the enolase family. As to quaternary structure, interacts with ENO1 and AKAP4. In terms of processing, synthesized as an approximately 70-kDa precursor, which then undergoes proteolytic cleavage to an approximately 60-kDa enzyme; HOATZ associates directly or indirectly with ENO4 to mediate this process before its transport to mature flagella.

It carries out the reaction (2R)-2-phosphoglycerate = phosphoenolpyruvate + H2O. The protein operates within carbohydrate degradation; glycolysis; pyruvate from D-glyceraldehyde 3-phosphate: step 4/5. Its function is as follows. May be required for sperm motility and function. The polypeptide is Enolase 4 (Homo sapiens (Human)).